A 162-amino-acid chain; its full sequence is 2-C-methyl-D-erythritol 2,4-cyclodiphosphate synthase (162 aa).

A divalent metal cation contacts are provided by D10 and H12. Residues 10-12 (DVH) and 36-37 (HS) each bind 4-CDP-2-C-methyl-D-erythritol 2-phosphate. Position 44 (H44) interacts with a divalent metal cation. 4-CDP-2-C-methyl-D-erythritol 2-phosphate contacts are provided by residues 58–60 (DIG), 63–67 (FPDTD), and R144.

The protein belongs to the IspF family. As to quaternary structure, homotrimer. The cofactor is a divalent metal cation.

The enzyme catalyses 4-CDP-2-C-methyl-D-erythritol 2-phosphate = 2-C-methyl-D-erythritol 2,4-cyclic diphosphate + CMP. It functions in the pathway isoprenoid biosynthesis; isopentenyl diphosphate biosynthesis via DXP pathway; isopentenyl diphosphate from 1-deoxy-D-xylulose 5-phosphate: step 4/6. In terms of biological role, involved in the biosynthesis of isopentenyl diphosphate (IPP) and dimethylallyl diphosphate (DMAPP), two major building blocks of isoprenoid compounds. Catalyzes the conversion of 4-diphosphocytidyl-2-C-methyl-D-erythritol 2-phosphate (CDP-ME2P) to 2-C-methyl-D-erythritol 2,4-cyclodiphosphate (ME-CPP) with a corresponding release of cytidine 5-monophosphate (CMP). This chain is 2-C-methyl-D-erythritol 2,4-cyclodiphosphate synthase, found in Laribacter hongkongensis (strain HLHK9).